The primary structure comprises 620 residues: Glutathione-regulated potassium-efflux system protein KefC (620 aa).

12 consecutive transmembrane segments (helical) span residues 4-24, 26-46, 54-74, 90-110, 114-134, 149-169, 178-198, 218-238, 270-290, 294-314, 327-347, and 359-379; these read HTLIQALIYLGSAALIVPIAV, LGLGSVLGYLIAGCIIGPWGL, SILHFAEIGVVLMLFIIGLEL, GALQMVICGGLLGLFCMLLGL, VAELIGMTLALSSTAIAMQAM, FAVLLFQDIAAIPLVAMIPLL, MGAFALSALKVAGALVLVVLL, VFSAVALFLVFGFGLLLEEVG, GLLLGLFFIGVGMSIDFGTLI, LRIVILLLGFLIIKIAMLWLI, WFAVLLGQGSEFAFVVFGAAQ, and SLTLAVALSMAATPILLVILN. Residues 399 to 518 enclose the RCK N-terminal domain; that stretch reads QPRVIIAGFG…AGVEKPERET (120 aa). Positions 597–620 are disordered; that stretch reads GWQGTEEGKHTGNMADEPETKPSS.

The protein belongs to the monovalent cation:proton antiporter 2 (CPA2) transporter (TC 2.A.37) family. KefC subfamily. In terms of assembly, homodimer. Interacts with the regulatory subunit KefF.

The protein localises to the cell inner membrane. Pore-forming subunit of a potassium efflux system that confers protection against electrophiles. Catalyzes K(+)/H(+) antiport. This chain is Glutathione-regulated potassium-efflux system protein KefC, found in Escherichia coli (strain SMS-3-5 / SECEC).